Here is a 125-residue protein sequence, read N- to C-terminus: Anticoagulant salivary protein 14 (125 aa).

A signal peptide spans 1 to 21 (MGLTGTMLVLVSLAFFGSAAA). Asn-26, Asn-81, and Asn-87 each carry an N-linked (GlcNAc...) asparagine glycan. The segment covering 75 to 86 (GECHLTNNSGGP) has biased composition (polar residues). The segment at 75 to 125 (GECHLTNNSGGPNETDDYTPAPTEKPKQKKKKTKKTKKPKRKSKKDQEKNL) is disordered. A responsible for anticoagulant activity region spans residues 91-125 (DYTPAPTEKPKQKKKKTKKTKKPKRKSKKDQEKNL). Over residues 101–118 (KQKKKKTKKTKKPKRKSK) the composition is skewed to basic residues.

Belongs to the salp14 family. In terms of tissue distribution, salivary gland (at protein level). Saliva (at protein level).

The protein localises to the secreted. Its function is as follows. Salivary anticoagulant protein that facilitates blood feeding of adult ticks on vertebrate species. Inhibits host coagulation factor Xa (F10). Blocks the assembly and/or early activity of the prothrombinase complex (Xa-Va/F10-F5). Inhibits the lectin pathway of complement system activation in the host. This Ixodes scapularis (Black-legged tick) protein is Anticoagulant salivary protein 14.